Reading from the N-terminus, the 115-residue chain is uncharacterized protein (115 aa).

The N-terminal stretch at 1-24 is a signal peptide; it reads MLPLCLTFLSFFLSLGGSFKAVMT. The next 2 membrane-spanning stretches (helical) occupy residues 39-59 and 93-113; these read FWIFNWTVTLIPLNSLVALAI and YLTSLGSNFGGIFVYPLFLLS.

It is found in the membrane. This is an uncharacterized protein from Saccharomyces cerevisiae (strain ATCC 204508 / S288c) (Baker's yeast).